Consider the following 697-residue polypeptide: Serine/threonine-protein kinase tousled-like 2 (697 aa).

Disordered stretches follow at residues 25–159 (VAKG…SQSE) and 288–316 (KLLIKKKPPSASQTPPPNLEPNKRKSKSN). Over residues 31-44 (HNESSNQSLCSVGS) the composition is skewed to polar residues. The segment covering 46 to 61 (SDKELETPEKKSNDQR) has biased composition (basic and acidic residues). A compositionally biased stretch (polar residues) spans 109–145 (SSPQHSLSNPPAAVQQGSPSSISSVNTDHSHTSTSHK). Coiled coils occupy residues 265–294 (AFQNLVKQQERVNGQREEIERQRKLLIKKK) and 336–373 (KLRLGHLKKEEAEIQVELERLERVRNLHIRELKRIHNE). A Protein kinase domain is found at 388-666 (YLLLHLLGRG…VHQLASDPYL (279 aa)). Residues 394–402 (LGRGGFSEV) and K417 each bind ATP. Residue D518 is the Proton acceptor of the active site.

The protein belongs to the protein kinase superfamily. Ser/Thr protein kinase family. Monomer. May form homodimers; homodimerization may enhance autophosphoylation and enzymatic activity. Heterodimer with TLK1. It depends on Mg(2+) as a cofactor. Post-translationally, phosphorylated. Autophosphorylated; phosphorylation promotes the assembly of higher order oligomers and enzymatic activity.

It is found in the nucleus. Its subcellular location is the nucleoplasm. It localises to the cytoplasm. The protein resides in the perinuclear region. The protein localises to the cytoskeleton. The catalysed reaction is L-seryl-[protein] + ATP = O-phospho-L-seryl-[protein] + ADP + H(+). It catalyses the reaction L-threonyl-[protein] + ATP = O-phospho-L-threonyl-[protein] + ADP + H(+). Serine/threonine-protein kinase involved in the process of chromatin assembly and probably also DNA replication, transcription, repair, and chromosome segregation. Negative regulator of amino acid starvation-induced autophagy. This Danio rerio (Zebrafish) protein is Serine/threonine-protein kinase tousled-like 2.